The primary structure comprises 466 residues: Ribulose bisphosphate carboxylase/oxygenase activase, chloroplastic (466 aa).

The N-terminal 48 residues, 1–48, are a transit peptide targeting the chloroplast; sequence MAAAFSSTVGAPASTPTNFLGKKLKKQVTSAVNYHGKSSNINRFKVMA. 156 to 163 is a binding site for ATP; that stretch reads GGKGQGKS. The interval 429–454 is disordered; it reads QGAQQAGNLPVPEGCTDPVAKNFDPT.

Belongs to the RuBisCO activase family.

It is found in the plastid. The protein localises to the chloroplast stroma. In terms of biological role, activation of RuBisCO (ribulose-1,5-bisphosphate carboxylase/oxygenase; EC 4.1.1.39) involves the ATP-dependent carboxylation of the epsilon-amino group of lysine leading to a carbamate structure. The chain is Ribulose bisphosphate carboxylase/oxygenase activase, chloroplastic (RCA) from Oryza sativa subsp. japonica (Rice).